The chain runs to 1589 residues: Polyhomeotic-proximal chromatin protein (1589 aa).

Over residues 1–15 (MDRRALKFMQKRADT) the composition is skewed to basic and acidic residues. Disordered regions lie at residues 1 to 85 (MDRR…GGKQ), 107 to 174 (KYDV…NCNS), 252 to 290 (LQQQ…STAI), 1112 to 1244 (LSTA…STTT), and 1260 to 1294 (AVST…NGSK). 3 stretches are compositionally biased toward low complexity: residues 18-28 (DTTTPVSTTAS), 60-80 (NHNN…QQQQ), and 119-139 (AQQQ…VTPT). The span at 154-174 (HTPSTPNRPSAPSTPNTNCNS) shows a compositional bias: polar residues. Positions 260 to 271 (NGGGAASAGAGG) are enriched in gly residues. Positions 272–285 (AASPANSQQSQQQQ) are enriched in low complexity. At serine 1145 the chain carries Phosphoserine. Threonine 1148 is subject to Phosphothreonine. Low complexity predominate over residues 1157–1180 (TTPKSSTPATVSASVEASSSTGEA). A compositionally biased stretch (polar residues) spans 1189–1221 (RSSTPSKGATTPTSKQSNAAVQPPSSTTPNSVS). Low complexity-rich tracts occupy residues 1230-1244 (TCGS…STTT) and 1260-1290 (AVST…SSIS). The FCS-type zinc-finger motif lies at 1356–1389 (SAPGSDMVACEQCGKMEHKAKLKRKRYCSPGCSR). Residues cysteine 1365, cysteine 1368, cysteine 1383, and cysteine 1387 each coordinate Zn(2+). Positions 1513–1577 (WSVDDVSNFI…VAKVESIKEV (65 aa)) constitute an SAM domain.

In terms of assembly, component of PRC1 complex, which contains many PcG proteins like Pc, ph, Scm, Psc, Sce and also chromatin-remodeling proteins such as histone deacetylases. This complex is distinct from the Esc/E(z) complex, at least composed of esc, E(z), Su(z)12, HDAC1/Rpd3 and Caf1-55. The 2 complexes however cooperate and interact together during the first 3 hours of development to establish PcG silencing. Interacts with the SAM domain of Scm via its SAM domain in vitro. Interacts with Trl in vivo and with corto in vitro. As to expression, salivary glands.

It localises to the nucleus. In terms of biological role, polycomb group (PcG) protein. PcG proteins act by forming multiprotein complexes, which are required to maintain the transcriptionally repressive state of homeotic genes throughout development. PcG proteins are not required to initiate repression, but to maintain it during later stages of development. Component of the PcG multiprotein PRC1 complex, a complex that acts via chromatin remodeling and modification of histones; it mediates monoubiquitination of histone H2A 'Lys-118', rendering chromatin heritably changed in its expressibility. Plays a role in regulating the expression of other pair-rule genes such as eve, ftz, and H. The sequence is that of Polyhomeotic-proximal chromatin protein (ph-p) from Drosophila melanogaster (Fruit fly).